The following is a 228-amino-acid chain: Max-interacting protein 1 (228 aa).

Disordered stretches follow at residues Gly29–Glu76 and Gly162–Ser228. Basic residues predominate over residues Gln43 to Lys56. A compositionally biased stretch (polar residues) spans His57–Ser70. The 53-residue stretch at Ala67–Leu119 folds into the bHLH domain. Over residues Glu173–Ser183 the composition is skewed to acidic residues. Positions Gly216 to Ser228 are enriched in polar residues.

Efficient DNA binding requires dimerization with another bHLH protein. Binds DNA as a heterodimer with MAX. Interacts with SMC3. Interacts with RNF17.

The protein resides in the nucleus. In terms of biological role, transcriptional repressor. MXI1 binds with MAX to form a sequence-specific DNA-binding protein complex which recognizes the core sequence 5'-CAC[GA]TG-3'. MXI1 thus antagonizes MYC transcriptional activity by competing for MAX. This Rattus norvegicus (Rat) protein is Max-interacting protein 1 (Mxi1).